The following is a 540-amino-acid chain: MFDTKKVLELANKDFEKAWITTKDLIKDAPINKKYPRIKPSFGKTNPVMDTIEQLRQAYLRMGFEEYINPVIVDEKDIYKQFGPEAMAVLDRCFYLAGLPRPDIGLSNDKIEQIEKLGIKIDSNEKKENLRKTLHLYKKGVLEGDDLVYEIANSLGLSNEMGLKILEEVFPEFKNLKAESLPLTLRSHMTSGWFITISEMMGKKPLPYALFSIDRCFRREQKEDKSHLMTYHSASCVLVGEDITLDDGKAIAEGLLSQFGFTDFQFRPDEKKSKYYTPETQTEVYAYHPKLKEWLEVATFGIYSPIALSKYNISVPVMNLGLGVERLAMINHNYEDVRKMVYPQFYEQTLSDRDIAYSIKVDKVPVLDELKDLTGELIELCVKNKDKQSPCEVFIEKKIKFYNTTKTIKITLFEKEEGKNLLGPSILNKIFVHNGNIFGVPESFDNVKEEFVKVLSEAKNKGAPTNLTYIDTICYKITSKIEEALISNTKKLKIRAPIVRSLSDVNLKIDELALKQIMGNNKVIDIRGPVFLNVKCEIND.

Substrate-binding positions include 188-190 (HMT), 233-235 (SAS), 275-276 (YY), and asparagine 319.

This sequence belongs to the class-II aminoacyl-tRNA synthetase family. O-phosphoseryl-tRNA(Cys) synthetase subfamily. In terms of assembly, homotetramer. Interacts with SepCysS.

The catalysed reaction is tRNA(Cys) + O-phospho-L-serine + ATP = O-phospho-L-seryl-tRNA(Cys) + AMP + diphosphate. Functionally, catalyzes the attachment of O-phosphoserine (Sep) to tRNA(Cys). In Methanococcus aeolicus (strain ATCC BAA-1280 / DSM 17508 / OCM 812 / Nankai-3), this protein is O-phosphoserine--tRNA(Cys) ligase.